The following is a 174-amino-acid chain: Membrane protein NfeD2 (174 aa).

3 helical membrane-spanning segments follow: residues 16-36 (LIIA…FSGL), 47-67 (LVLS…LVLP), and 72-92 (LIAL…HIFV).

This sequence belongs to the NfeD family.

It is found in the cell membrane. It localises to the membrane raft. Functionally, plays a role in assembly of FloT membrane rafts, probably recruited to rafts by FloT. This chain is Membrane protein NfeD2, found in Bacillus subtilis (strain 168).